Here is a 405-residue protein sequence, read N- to C-terminus: Replication factor C large subunit (405 aa).

47–54 (GPPGVGKT) contributes to the ATP binding site.

This sequence belongs to the activator 1 small subunits family. RfcL subfamily. Heteromultimer composed of small subunits (RfcS) and large subunits (RfcL).

Its function is as follows. Part of the RFC clamp loader complex which loads the PCNA sliding clamp onto DNA. The protein is Replication factor C large subunit of Saccharolobus islandicus (strain Y.N.15.51 / Yellowstone #2) (Sulfolobus islandicus).